A 445-amino-acid chain; its full sequence is Trigger factor (445 aa).

Residues 162–247 (GDQVTIDAIG…IKAVHTAEPT (86 aa)) form the PPIase FKBP-type domain.

This sequence belongs to the FKBP-type PPIase family. Tig subfamily.

The protein resides in the cytoplasm. The catalysed reaction is [protein]-peptidylproline (omega=180) = [protein]-peptidylproline (omega=0). In terms of biological role, involved in protein export. Acts as a chaperone by maintaining the newly synthesized protein in an open conformation. Functions as a peptidyl-prolyl cis-trans isomerase. The sequence is that of Trigger factor from Rickettsia conorii (strain ATCC VR-613 / Malish 7).